The chain runs to 363 residues: Dual-specificity RNA methyltransferase RlmN (363 aa).

Catalysis depends on Glu102, which acts as the Proton acceptor. The 242-residue stretch at 108-349 (EKKRATLCVS…KNRGQDIGAA (242 aa)) folds into the Radical SAM core domain. Cys115 and Cys350 form a disulfide bridge. [4Fe-4S] cluster contacts are provided by Cys122, Cys126, and Cys129. S-adenosyl-L-methionine is bound by residues 174 to 175 (GE), Ser206, 228 to 230 (SLH), and Asn307. The active-site S-methylcysteine intermediate is the Cys350.

Belongs to the radical SAM superfamily. RlmN family. [4Fe-4S] cluster is required as a cofactor.

Its subcellular location is the cytoplasm. It carries out the reaction adenosine(2503) in 23S rRNA + 2 reduced [2Fe-2S]-[ferredoxin] + 2 S-adenosyl-L-methionine = 2-methyladenosine(2503) in 23S rRNA + 5'-deoxyadenosine + L-methionine + 2 oxidized [2Fe-2S]-[ferredoxin] + S-adenosyl-L-homocysteine. It catalyses the reaction adenosine(37) in tRNA + 2 reduced [2Fe-2S]-[ferredoxin] + 2 S-adenosyl-L-methionine = 2-methyladenosine(37) in tRNA + 5'-deoxyadenosine + L-methionine + 2 oxidized [2Fe-2S]-[ferredoxin] + S-adenosyl-L-homocysteine. In terms of biological role, specifically methylates position 2 of adenine 2503 in 23S rRNA and position 2 of adenine 37 in tRNAs. m2A2503 modification seems to play a crucial role in the proofreading step occurring at the peptidyl transferase center and thus would serve to optimize ribosomal fidelity. This Buchnera aphidicola subsp. Schizaphis graminum (strain Sg) protein is Dual-specificity RNA methyltransferase RlmN.